The sequence spans 459 residues: Argininosuccinate lyase (459 aa).

Belongs to the lyase 1 family. Argininosuccinate lyase subfamily.

The protein localises to the cytoplasm. It carries out the reaction 2-(N(omega)-L-arginino)succinate = fumarate + L-arginine. It participates in amino-acid biosynthesis; L-arginine biosynthesis; L-arginine from L-ornithine and carbamoyl phosphate: step 3/3. This Prochlorococcus marinus subsp. pastoris (strain CCMP1986 / NIES-2087 / MED4) protein is Argininosuccinate lyase.